Consider the following 154-residue polypeptide: Myoglobin (154 aa).

A Globin domain is found at 2 to 148; that stretch reads GLSDGEWQLV…FRNDMAAKYK (147 aa). Serine 4 bears the Phosphoserine mark. Position 65 (histidine 65) interacts with nitrite. Histidine 65 is an O2 binding site. The residue at position 68 (threonine 68) is a Phosphothreonine. Heme b is bound at residue histidine 94.

Belongs to the globin family. As to quaternary structure, monomeric.

It is found in the cytoplasm. The protein resides in the sarcoplasm. The enzyme catalyses Fe(III)-heme b-[protein] + nitric oxide + H2O = Fe(II)-heme b-[protein] + nitrite + 2 H(+). It carries out the reaction H2O2 + AH2 = A + 2 H2O. Functionally, monomeric heme protein which primary function is to store oxygen and facilitate its diffusion within muscle tissues. Reversibly binds oxygen through a pentacoordinated heme iron and enables its timely and efficient release as needed during periods of heightened demand. Depending on the oxidative conditions of tissues and cells, and in addition to its ability to bind oxygen, it also has a nitrite reductase activity whereby it regulates the production of bioactive nitric oxide. Under stress conditions, like hypoxia and anoxia, it also protects cells against reactive oxygen species thanks to its pseudoperoxidase activity. The chain is Myoglobin (MB) from Aotus trivirgatus (Three-striped night monkey).